Here is a 468-residue protein sequence, read N- to C-terminus: Phenylalanine--tRNA ligase alpha subunit (468 aa).

L-phenylalanine-binding positions include threonine 311, 350 to 352 (QLD), and phenylalanine 390. Residue glutamate 392 participates in Mg(2+) binding.

Belongs to the class-II aminoacyl-tRNA synthetase family. Phe-tRNA synthetase alpha subunit type 2 subfamily. As to quaternary structure, tetramer of two alpha and two beta subunits. Requires Mg(2+) as cofactor.

The protein resides in the cytoplasm. The enzyme catalyses tRNA(Phe) + L-phenylalanine + ATP = L-phenylalanyl-tRNA(Phe) + AMP + diphosphate + H(+). This chain is Phenylalanine--tRNA ligase alpha subunit, found in Saccharolobus solfataricus (strain ATCC 35092 / DSM 1617 / JCM 11322 / P2) (Sulfolobus solfataricus).